We begin with the raw amino-acid sequence, 100 residues long: Probable antitoxin MazE1 (100 aa).

The disordered stretch occupies residues 77–100 (PYESEAERSAARARRNARQQRSAQ).

As to quaternary structure, forms a complex with cognate toxin MazF1.

In terms of biological role, probable antitoxin component of a type II toxin-antitoxin (TA) system. Labile antitoxin that binds to cognate MazF1 toxin and counteracts its endoribonuclease activity. This chain is Probable antitoxin MazE1 (mazE1), found in Mycobacterium bovis (strain ATCC BAA-935 / AF2122/97).